Here is a 64-residue protein sequence, read N- to C-terminus: Large ribosomal subunit protein bL35 (64 aa).

It belongs to the bacterial ribosomal protein bL35 family.

The chain is Large ribosomal subunit protein bL35 from Clavibacter michiganensis subsp. michiganensis (strain NCPPB 382).